The sequence spans 146 residues: Large ribosomal subunit protein uL15 (146 aa).

The tract at residues 1–54 (MTLRLNELAPAEGAKRDNRRLGRGIGSGVGKTGGRGVKGQKSRKSGGVRPGFEG) is disordered. Gly residues predominate over residues 23–37 (RGIGSGVGKTGGRGV).

This sequence belongs to the universal ribosomal protein uL15 family. As to quaternary structure, part of the 50S ribosomal subunit.

Binds to the 23S rRNA. The polypeptide is Large ribosomal subunit protein uL15 (Acinetobacter baylyi (strain ATCC 33305 / BD413 / ADP1)).